Reading from the N-terminus, the 312-residue chain is Sulfate adenylyltransferase subunit 2 (312 aa).

The protein belongs to the PAPS reductase family. CysD subfamily. In terms of assembly, heterodimer composed of CysD, the smaller subunit, and CysN.

The enzyme catalyses sulfate + ATP + H(+) = adenosine 5'-phosphosulfate + diphosphate. Its pathway is sulfur metabolism; hydrogen sulfide biosynthesis; sulfite from sulfate: step 1/3. With CysN forms the ATP sulfurylase (ATPS) that catalyzes the adenylation of sulfate producing adenosine 5'-phosphosulfate (APS) and diphosphate, the first enzymatic step in sulfur assimilation pathway. APS synthesis involves the formation of a high-energy phosphoric-sulfuric acid anhydride bond driven by GTP hydrolysis by CysN coupled to ATP hydrolysis by CysD. The polypeptide is Sulfate adenylyltransferase subunit 2 (Methylobacterium nodulans (strain LMG 21967 / CNCM I-2342 / ORS 2060)).